The sequence spans 217 residues: Elongation factor Ts (217 aa).

Residues 81–84 form an involved in Mg(2+) ion dislocation from EF-Tu region; that stretch reads TDFV.

The protein belongs to the EF-Ts family.

It localises to the cytoplasm. Associates with the EF-Tu.GDP complex and induces the exchange of GDP to GTP. It remains bound to the aminoacyl-tRNA.EF-Tu.GTP complex up to the GTP hydrolysis stage on the ribosome. The protein is Elongation factor Ts of Myxococcus xanthus (strain DK1622).